Reading from the N-terminus, the 223-residue chain is Keratin-associated protein 5-4 (223 aa).

Tandem repeats lie at residues Cys-21–Pro-24, Cys-27–Pro-30, Cys-79–Pro-82, Cys-89–Pro-92, Cys-107–Pro-110, Cys-117–Pro-120, Cys-135–Pro-138, Cys-145–Pro-148, Cys-155–Pro-158, Cys-173–Pro-176, Cys-183–Pro-186, Cys-193–Pro-196, Cys-203–Pro-206, and Cys-213–Pro-216. Positions Cys-21 to Pro-216 are 14 X 4 AA repeats of C-C-X-P.

This sequence belongs to the KRTAP type 5 family. In terms of assembly, interacts with hair keratins. In terms of tissue distribution, expressed during the active phases of the hair cycle in the medulla and the inner root sheath of the forming hair. Also expressed in the upper layers of the epidermis of skin.

Functionally, in the hair cortex, hair keratin intermediate filaments are embedded in an interfilamentous matrix, consisting of hair keratin-associated protein (KRTAP), which are essential for the formation of a rigid and resistant hair shaft through their extensive disulfide bond cross-linking with abundant cysteine residues of hair keratins. The matrix proteins include the high-sulfur and high-glycine-tyrosine keratins. This Mus musculus (Mouse) protein is Keratin-associated protein 5-4.